The following is a 244-amino-acid chain: 5-oxoprolinase subunit A (244 aa).

It belongs to the LamB/PxpA family. Forms a complex composed of PxpA, PxpB and PxpC.

It catalyses the reaction 5-oxo-L-proline + ATP + 2 H2O = L-glutamate + ADP + phosphate + H(+). Catalyzes the cleavage of 5-oxoproline to form L-glutamate coupled to the hydrolysis of ATP to ADP and inorganic phosphate. The sequence is that of 5-oxoprolinase subunit A from Escherichia coli O7:K1 (strain IAI39 / ExPEC).